Reading from the N-terminus, the 710-residue chain is Probable GTP diphosphokinase RSH2, chloroplastic (710 aa).

The transit peptide at 1–63 directs the protein to the chloroplast; that stretch reads MVVATTIALY…SSLFSSASVK (63 aa). The HD domain occupies 233–337; the sequence is YLQHCVETAM…IKLADRLHNM (105 aa).

The protein belongs to the RelA/SpoT family.

It is found in the plastid. The protein resides in the chloroplast. It carries out the reaction GTP + ATP = guanosine 3'-diphosphate 5'-triphosphate + AMP. In terms of biological role, probable ppGpp (guanosine 3'-diphosphate 5'-diphosphate) synthetase that may be involved in a rapid plant ppGpp-mediated response to pathogens and other stresses. The polypeptide is Probable GTP diphosphokinase RSH2, chloroplastic (RSH2) (Arabidopsis thaliana (Mouse-ear cress)).